The sequence spans 565 residues: Nephrocystin-1 (565 aa).

A compositionally biased stretch (acidic residues) spans 1–32; that stretch reads GEEEDEEEEEEEESEEGGGEEEESEEEEEEKQ. 2 disordered regions span residues 1–46 and 95–132; these read GEEE…KEYI and VEPY…KQRT. A coiled-coil region spans residues 2 to 48; it reads EEEDEEEEEEEESEEGGGEEEESEEEEEEKQENESHHQATSKEYIAV. A Phosphoserine modification is found at Ser14. Positions 40–100 constitute an SH3 domain; sequence ATSKEYIAVG…PRTYVEPYNK (61 aa). Residues 104-118 show a composition bias toward acidic residues; that stretch reads QDTSEEEDSEEDVEV. A Phosphotyrosine; by FAK2 modification is found at Tyr182. Tyr554 is subject to Phosphotyrosine; by SRC.

The protein belongs to the nephrocystin-1 family. In terms of assembly, interacts with Crk-associated substrate BCAR1, NPHP4, PTK2B/PYK2 and tensin. Interacts with INVS and NPHP3. Interacts with AHI1 and TNK2. Interacts with NPHP4 in a complex containing NPHP1, NPHP4 and RPGRIP1L/NPHP8. Interacts with IQCB1; the interaction likely requires additional interactors. Interacts with KIF7. Interacts with ANKS3. Interacts with SPATA7. Interacts with FLNA. In terms of tissue distribution, expressed in renal cells (at protein level).

The protein resides in the cell junction. The protein localises to the adherens junction. It localises to the cell projection. It is found in the cilium. Its subcellular location is the cytoplasm. The protein resides in the cytoskeleton. The protein localises to the cilium axoneme. It localises to the tight junction. In terms of biological role, together with BCAR1 it may play a role in the control of epithelial cell polarity. Involved in the organization of apical junctions in kidney cells together with NPHP4 and RPGRIP1L/NPHP8. Does not seem to be strictly required for ciliogenesis. Seems to help to recruit PTK2B/PYK2 to cell matrix adhesions, thereby initiating phosphorylation of PTK2B/PYK2 and PTK2B/PYK2-dependent signaling. May play a role in the regulation of intraflagellar transport (IFT) during cilia assembly. Required for normal retina development. In connecting photoreceptor cilia influences the movement of some IFT proteins such as IFT88 and WDR19. Involved in spermatogenesis. In Canis lupus familiaris (Dog), this protein is Nephrocystin-1 (NPHP1).